The sequence spans 201 residues: 3-isopropylmalate dehydratase small subunit (201 aa).

It belongs to the LeuD family. LeuD type 1 subfamily. Heterodimer of LeuC and LeuD.

It catalyses the reaction (2R,3S)-3-isopropylmalate = (2S)-2-isopropylmalate. The protein operates within amino-acid biosynthesis; L-leucine biosynthesis; L-leucine from 3-methyl-2-oxobutanoate: step 2/4. Functionally, catalyzes the isomerization between 2-isopropylmalate and 3-isopropylmalate, via the formation of 2-isopropylmaleate. The chain is 3-isopropylmalate dehydratase small subunit from Salmonella schwarzengrund (strain CVM19633).